The chain runs to 1404 residues: DNA-directed RNA polymerase subunit beta' (1404 aa).

The Zn(2+) site is built by cysteine 70, cysteine 72, cysteine 85, and cysteine 88. Mg(2+) contacts are provided by aspartate 460, aspartate 462, and aspartate 464. 4 residues coordinate Zn(2+): cysteine 825, cysteine 899, cysteine 906, and cysteine 909.

Belongs to the RNA polymerase beta' chain family. The RNAP catalytic core consists of 2 alpha, 1 beta, 1 beta' and 1 omega subunit. When a sigma factor is associated with the core the holoenzyme is formed, which can initiate transcription. Requires Mg(2+) as cofactor. Zn(2+) serves as cofactor.

The enzyme catalyses RNA(n) + a ribonucleoside 5'-triphosphate = RNA(n+1) + diphosphate. Functionally, DNA-dependent RNA polymerase catalyzes the transcription of DNA into RNA using the four ribonucleoside triphosphates as substrates. This is DNA-directed RNA polymerase subunit beta' from Nitrosomonas eutropha (strain DSM 101675 / C91 / Nm57).